The chain runs to 650 residues: Probable potassium transport system protein Kup 1 (650 aa).

12 helical membrane passes run 12 to 32, 54 to 74, 97 to 117, 139 to 159, 170 to 190, 216 to 236, 249 to 269, 295 to 315, 344 to 364, 375 to 395, 400 to 420, and 428 to 448; these read GLLIAIGIVYGDIGTSPLYVM, ISLVLWTVTLLTTLQTVIIAL, WLVLPALIGGAAILADGTLTP, VSSQSMVIAITVLILLVLFSI, AFGPIMFVWFTFLGVIGLINM, AGIFILGSIFLATTGAEALYS, SWPFVFVCLSLNYFGQGVWIL, LAAIILATIAAVIASQALITG, IYIPSINKGICVATIAIVLYF, GLSITISMLMTTILLYEWLAM, PVWNWIFLIFFGVLDIMFMIS, and GGYVSLFIAGAIGFIMYVWYY.

Belongs to the HAK/KUP transporter (TC 2.A.72) family.

It localises to the cell membrane. The enzyme catalyses K(+)(in) + H(+)(in) = K(+)(out) + H(+)(out). Functionally, transport of potassium into the cell. Likely operates as a K(+):H(+) symporter. The protein is Probable potassium transport system protein Kup 1 of Lactobacillus acidophilus (strain ATCC 700396 / NCK56 / N2 / NCFM).